A 189-amino-acid chain; its full sequence is Photosystem I assembly protein Ycf4 (189 aa).

2 helical membrane-spanning segments follow: residues 29-49 and 69-89; these read WATI…SSYL and LVMG…WLVI.

It belongs to the Ycf4 family.

The protein resides in the cellular thylakoid membrane. In terms of biological role, seems to be required for the assembly of the photosystem I complex. This Nostoc punctiforme (strain ATCC 29133 / PCC 73102) protein is Photosystem I assembly protein Ycf4.